The following is a 136-amino-acid chain: Small ribosomal subunit protein uS9 (136 aa).

The protein belongs to the universal ribosomal protein uS9 family.

The sequence is that of Small ribosomal subunit protein uS9 from Borreliella afzelii (strain PKo) (Borrelia afzelii).